The chain runs to 400 residues: Enoyl-[acyl-carrier-protein] reductase [NADH] (400 aa).

Residues 48-53, 74-75, 111-112, and 139-140 each bind NAD(+); these read GASTGY, FE, DA, and LA. Residue Y225 participates in substrate binding. Y235 functions as the Proton donor in the catalytic mechanism. NAD(+) contacts are provided by residues K244 and 273 to 275; that span reads VVT.

It belongs to the TER reductase family. Monomer.

It catalyses the reaction a 2,3-saturated acyl-[ACP] + NAD(+) = a (2E)-enoyl-[ACP] + NADH + H(+). The protein operates within lipid metabolism; fatty acid biosynthesis. Involved in the final reduction of the elongation cycle of fatty acid synthesis (FAS II). Catalyzes the reduction of a carbon-carbon double bond in an enoyl moiety that is covalently linked to an acyl carrier protein (ACP). The polypeptide is Enoyl-[acyl-carrier-protein] reductase [NADH] (Burkholderia vietnamiensis (strain G4 / LMG 22486) (Burkholderia cepacia (strain R1808))).